We begin with the raw amino-acid sequence, 410 residues long: Histidine--tRNA ligase (410 aa).

This sequence belongs to the class-II aminoacyl-tRNA synthetase family.

The protein resides in the cytoplasm. It carries out the reaction tRNA(His) + L-histidine + ATP = L-histidyl-tRNA(His) + AMP + diphosphate + H(+). This Methanoregula boonei (strain DSM 21154 / JCM 14090 / 6A8) protein is Histidine--tRNA ligase.